The chain runs to 1126 residues: Protein translocase subunit SecA (1126 aa).

ATP is bound by residues Gln175, 193–197 (GEGKT), and Asp694. Residues 1060–1126 (VQEAAPEKHE…KYKNCHGQGL (67 aa)) form a disordered region. Residues 1064–1080 (APEKHEDMSRYRTEKTD) show a composition bias toward basic and acidic residues. 4 residues coordinate Zn(2+): Cys1110, Cys1112, Cys1121, and His1122.

This sequence belongs to the SecA family. In terms of assembly, monomer and homodimer. Part of the essential Sec protein translocation apparatus which comprises SecA, SecYEG and auxiliary proteins SecDF. Other proteins may also be involved. Zn(2+) serves as cofactor.

It localises to the cell inner membrane. The protein resides in the cytoplasm. It catalyses the reaction ATP + H2O + cellular proteinSide 1 = ADP + phosphate + cellular proteinSide 2.. In terms of biological role, part of the Sec protein translocase complex. Interacts with the SecYEG preprotein conducting channel. Has a central role in coupling the hydrolysis of ATP to the transfer of proteins into and across the cell membrane, serving as an ATP-driven molecular motor driving the stepwise translocation of polypeptide chains across the membrane. The chain is Protein translocase subunit SecA from Parabacteroides distasonis (strain ATCC 8503 / DSM 20701 / CIP 104284 / JCM 5825 / NCTC 11152).